We begin with the raw amino-acid sequence, 346 residues long: Putative agmatine deiminase (346 aa).

Cys338 acts as the Amidino-cysteine intermediate in catalysis.

It belongs to the agmatine deiminase family.

It carries out the reaction agmatine + H2O = N-carbamoylputrescine + NH4(+). In Streptomyces avermitilis (strain ATCC 31267 / DSM 46492 / JCM 5070 / NBRC 14893 / NCIMB 12804 / NRRL 8165 / MA-4680), this protein is Putative agmatine deiminase.